A 137-amino-acid chain; its full sequence is Ribosome-binding factor A (137 aa).

The protein belongs to the RbfA family. As to quaternary structure, monomer. Binds 30S ribosomal subunits, but not 50S ribosomal subunits or 70S ribosomes.

The protein resides in the cytoplasm. In terms of biological role, one of several proteins that assist in the late maturation steps of the functional core of the 30S ribosomal subunit. Associates with free 30S ribosomal subunits (but not with 30S subunits that are part of 70S ribosomes or polysomes). Required for efficient processing of 16S rRNA. May interact with the 5'-terminal helix region of 16S rRNA. This Allorhizobium ampelinum (strain ATCC BAA-846 / DSM 112012 / S4) (Agrobacterium vitis (strain S4)) protein is Ribosome-binding factor A.